We begin with the raw amino-acid sequence, 133 residues long: Small ribosomal subunit protein uS8 (133 aa).

Belongs to the universal ribosomal protein uS8 family. In terms of assembly, part of the 30S ribosomal subunit. Contacts proteins S5 and S12.

Its function is as follows. One of the primary rRNA binding proteins, it binds directly to 16S rRNA central domain where it helps coordinate assembly of the platform of the 30S subunit. The protein is Small ribosomal subunit protein uS8 of Endomicrobium trichonymphae.